Here is a 765-residue protein sequence, read N- to C-terminus: BRCA1-associated RING domain protein 1 (765 aa).

The required for BRCA1 binding stretch occupies residues 20–113 (MEPATDGLWA…KLQNLLHDNK (94 aa)). The RING-type zinc-finger motif lies at 44–81 (CSRCANILKEPVCLGGCEHIFCSGCISDCVGSGCPVCY). Lys152 is covalently cross-linked (Glycyl lysine isopeptide (Lys-Gly) (interchain with G-Cter in SUMO2)). Disordered regions lie at residues 183-229 (AVPK…EELK), 299-328 (KDLR…GSNI), and 369-410 (NASD…MPAR). Basic residues predominate over residues 195 to 204 (SAKKHPKKSV). The span at 207-229 (INREENLRPETKDSRFDSKEELK) shows a compositional bias: basic and acidic residues. The segment covering 316-328 (PTTSTSDSCGSNI) has biased composition (polar residues). Ser378 bears the Phosphoserine mark. Thr381 is subject to Phosphothreonine. Over residues 391-403 (HRQMMSSPSTVKL) the composition is skewed to polar residues. Lys411 is covalently cross-linked (Glycyl lysine isopeptide (Lys-Gly) (interchain with G-Cter in SUMO2)). ANK repeat units lie at residues 415-447 (RGET…VKDH), 448-480 (AGWT…TPGY), and 481-513 (QNDS…AVNI). The stretch at 514-534 (FGVRPVDYTDNENIRSLLLLP) is one ANK 4; degenerate repeat. Positions 542 to 546 (TSQCS) are flexible linker. BRCT domains are found at residues 549 to 641 (NTGQ…KYEV) and 655 to 765 (LLPK…PLDS).

In terms of assembly, homo- and heterodimer. Heterodimer (RING-type zinc finger) with BRCA1. Heterodimer (via ANK repeats and BRCT domains) with CSTF1/CSTF-50. Component of the BRCA1-A complex, at least composed of the BRCA1, BARD1, UIMC1/RAP80, ABRAXAS1, BRCC3/BRCC36, BABAM2 and BABAM1/NBA1. Interacts with UBXN1. Processed during apoptosis. The homodimer is more susceptible to proteolytic cleavage than the BARD1/BRCA1 heterodimer.

Its subcellular location is the nucleus. It localises to the cytoplasm. The enzyme catalyses S-ubiquitinyl-[E2 ubiquitin-conjugating enzyme]-L-cysteine + [acceptor protein]-L-lysine = [E2 ubiquitin-conjugating enzyme]-L-cysteine + N(6)-ubiquitinyl-[acceptor protein]-L-lysine.. It participates in protein modification; protein ubiquitination. Functionally, E3 ubiquitin-protein ligase. The BRCA1-BARD1 heterodimer specifically mediates the formation of 'Lys-6'-linked polyubiquitin chains and coordinates a diverse range of cellular pathways such as DNA damage repair, ubiquitination and transcriptional regulation to maintain genomic stability. Plays a central role in the control of the cell cycle in response to DNA damage. Acts by mediating ubiquitin E3 ligase activity that is required for its tumor suppressor function. Also forms a heterodimer with CSTF1/CSTF-50 to modulate mRNA processing and RNAP II stability by inhibiting pre-mRNA 3' cleavage. In Mus musculus (Mouse), this protein is BRCA1-associated RING domain protein 1 (Bard1).